The primary structure comprises 113 residues: MNTVRVTFLLVFVLAVSLGQADKDENRMEMQEKTEQGKSYLDFAENLLLQKLEELEAKLLEEDSEESRNSRQKRCIGEGVPCDENDPRCCSGLVCLKPTLHGIWYKSYYYYKK.

A signal peptide spans 1 to 21; that stretch reads MNTVRVTFLLVFVLAVSLGQA. Positions 22–74 are excised as a propeptide; the sequence is DKDENRMEMQEKTEQGKSYLDFAENLLLQKLEELEAKLLEEDSEESRNSRQKR. A disordered region spans residues 61–83; the sequence is EEDSEESRNSRQKRCIGEGVPCD. 2 cysteine pairs are disulfide-bonded: Cys75-Cys90 and Cys82-Cys95.

This sequence belongs to the neurotoxin 14 (magi-1) family. 01 (HNTX-16) subfamily. In terms of tissue distribution, expressed by the venom gland.

The protein localises to the secreted. In terms of biological role, probable ion channel inhibitor. The sequence is that of U11-theraphotoxin-Hhn1o from Cyriopagopus hainanus (Chinese bird spider).